We begin with the raw amino-acid sequence, 418 residues long: Pigment epithelium-derived factor (418 aa).

A signal peptide spans 1–19; the sequence is MQALVLLLCIGALLGHSSC. A Pyrrolidone carboxylic acid modification is found at Q20. The tract at residues 20-39 is disordered; that stretch reads QNPASPPEEGSPDPDSTGAL. Phosphoserine; by CK2 occurs at positions 24 and 114. S227 carries the post-translational modification Phosphoserine; by PKA. N285 carries N-linked (GlcNAc...) (complex) asparagine glycosylation. The segment at 371 to 383 is O-glycosylated at one site; it reads TTPSPGLQPAHLT.

Belongs to the serpin family. Interacts with PNPLA2; this interaction stimulates the phospholipase A2 activity of PNPLA2. In terms of processing, the N-terminus is blocked. Extracellular phosphorylation enhances antiangiogenic activity. Post-translationally, N- and O-glycosylated. O-glycosylated with a core 1 or possibly core 8 glycan. As to expression, retinal pigment epithelial cells and blood plasma.

The protein resides in the secreted. It is found in the melanosome. Its function is as follows. Neurotrophic protein; induces extensive neuronal differentiation in retinoblastoma cells. Potent inhibitor of angiogenesis. As it does not undergo the S (stressed) to R (relaxed) conformational transition characteristic of active serpins, it exhibits no serine protease inhibitory activity. The sequence is that of Pigment epithelium-derived factor (SERPINF1) from Homo sapiens (Human).